Here is a 432-residue protein sequence, read N- to C-terminus: Glutamate-1-semialdehyde 2,1-aminomutase (432 aa).

At K272 the chain carries N6-(pyridoxal phosphate)lysine.

This sequence belongs to the class-III pyridoxal-phosphate-dependent aminotransferase family. HemL subfamily. Homodimer. It depends on pyridoxal 5'-phosphate as a cofactor.

It localises to the cytoplasm. It catalyses the reaction (S)-4-amino-5-oxopentanoate = 5-aminolevulinate. It functions in the pathway porphyrin-containing compound metabolism; protoporphyrin-IX biosynthesis; 5-aminolevulinate from L-glutamyl-tRNA(Glu): step 2/2. The protein operates within porphyrin-containing compound metabolism; chlorophyll biosynthesis. The polypeptide is Glutamate-1-semialdehyde 2,1-aminomutase (Trichormus variabilis (strain ATCC 29413 / PCC 7937) (Anabaena variabilis)).